The sequence spans 166 residues: 2-amino-4-hydroxy-6-hydroxymethyldihydropteridine pyrophosphokinase (166 aa).

Belongs to the HPPK family.

The catalysed reaction is 6-hydroxymethyl-7,8-dihydropterin + ATP = (7,8-dihydropterin-6-yl)methyl diphosphate + AMP + H(+). It functions in the pathway cofactor biosynthesis; tetrahydrofolate biosynthesis; 2-amino-4-hydroxy-6-hydroxymethyl-7,8-dihydropteridine diphosphate from 7,8-dihydroneopterin triphosphate: step 4/4. Functionally, catalyzes the transfer of pyrophosphate from adenosine triphosphate (ATP) to 6-hydroxymethyl-7,8-dihydropterin, an enzymatic step in folate biosynthesis pathway. This Streptococcus pyogenes serotype M6 (strain ATCC BAA-946 / MGAS10394) protein is 2-amino-4-hydroxy-6-hydroxymethyldihydropteridine pyrophosphokinase (folK).